Here is a 78-residue protein sequence, read N- to C-terminus: Putative permease-like protein YdzE (78 aa).

Helical transmembrane passes span 2-22, 27-47, and 49-69; these read YLGI…LQLL, GGLF…ILLG, and QIGG…LLVI. The region spanning 2 to 70 is the EamA domain; it reads YLGIVSTACA…ILSGVLLVIK (69 aa).

The protein belongs to the EamA transporter family.

The protein resides in the cell membrane. The polypeptide is Putative permease-like protein YdzE (ydzE) (Bacillus subtilis (strain 168)).